The chain runs to 157 residues: WPP domain-containing protein 3 (157 aa).

Positions 1–20 (MAETADTINTTVSTPQPQLE) are enriched in polar residues. Positions 1-41 (MAETADTINTTVSTPQPQLESRSDETSCLQKHRSDATSEVT) are disordered. A compositionally biased stretch (basic and acidic residues) spans 32–41 (HRSDATSEVT). The interval 37–138 (TSEVTKEEKS…IESAEVRFKA (102 aa)) is WPP; degenerate.

Expressed in roots, stems and leaves.

The protein resides in the cytoplasm. It is found in the nucleus. Functionally, regulates the mitotic activity in roots. The chain is WPP domain-containing protein 3 (WPP3) from Arabidopsis thaliana (Mouse-ear cress).